A 339-amino-acid chain; its full sequence is Adenylosuccinate synthetase (339 aa).

Residues 12–18 (GDEGKGS) and 42–44 (GHS) contribute to the GTP site. Aspartate 13 acts as the Proton acceptor in catalysis. Mg(2+) is bound by residues aspartate 13 and glycine 42. IMP is bound by residues 13–16 (DEGK), 40–43 (NAGH), threonine 127, arginine 141, glutamine 179, threonine 194, and arginine 256. The active-site Proton donor is histidine 43. Substrate is bound at residue 252-258 (TVTGRRR). GTP contacts are provided by residues arginine 258, 284–286 (MLD), and 324–326 (KTG).

This sequence belongs to the adenylosuccinate synthetase family. Homodimer. Mg(2+) serves as cofactor.

The protein localises to the cytoplasm. The catalysed reaction is IMP + L-aspartate + GTP = N(6)-(1,2-dicarboxyethyl)-AMP + GDP + phosphate + 2 H(+). It functions in the pathway purine metabolism; AMP biosynthesis via de novo pathway; AMP from IMP: step 1/2. Functionally, plays an important role in the de novo pathway of purine nucleotide biosynthesis. Catalyzes the first committed step in the biosynthesis of AMP from IMP. This chain is Adenylosuccinate synthetase, found in Pyrococcus horikoshii (strain ATCC 700860 / DSM 12428 / JCM 9974 / NBRC 100139 / OT-3).